Here is a 476-residue protein sequence, read N- to C-terminus: Adenosylhomocysteinase (476 aa).

Positions 67, 142, and 202 each coordinate substrate. 203 to 205 (TTT) lines the NAD(+) pocket. Lysine 232 and aspartate 236 together coordinate substrate. NAD(+) is bound by residues asparagine 237, 266-271 (GYGDVG), glutamate 289, asparagine 324, 345-347 (IGH), and asparagine 390.

The protein belongs to the adenosylhomocysteinase family. NAD(+) is required as a cofactor.

The protein localises to the cytoplasm. It catalyses the reaction S-adenosyl-L-homocysteine + H2O = L-homocysteine + adenosine. The protein operates within amino-acid biosynthesis; L-homocysteine biosynthesis; L-homocysteine from S-adenosyl-L-homocysteine: step 1/1. Its function is as follows. May play a key role in the regulation of the intracellular concentration of adenosylhomocysteine. The polypeptide is Adenosylhomocysteinase (Synechococcus sp. (strain CC9311)).